A 298-amino-acid polypeptide reads, in one-letter code: 4-hydroxy-tetrahydrodipicolinate synthase (298 aa).

T51 contributes to the pyruvate binding site. Catalysis depends on Y139, which acts as the Proton donor/acceptor. Residue K167 is the Schiff-base intermediate with substrate of the active site. I209 lines the pyruvate pocket.

It belongs to the DapA family. As to quaternary structure, homotetramer; dimer of dimers.

The protein resides in the cytoplasm. The catalysed reaction is L-aspartate 4-semialdehyde + pyruvate = (2S,4S)-4-hydroxy-2,3,4,5-tetrahydrodipicolinate + H2O + H(+). The protein operates within amino-acid biosynthesis; L-lysine biosynthesis via DAP pathway; (S)-tetrahydrodipicolinate from L-aspartate: step 3/4. Catalyzes the condensation of (S)-aspartate-beta-semialdehyde [(S)-ASA] and pyruvate to 4-hydroxy-tetrahydrodipicolinate (HTPA). In Haemophilus influenzae (strain PittEE), this protein is 4-hydroxy-tetrahydrodipicolinate synthase.